We begin with the raw amino-acid sequence, 260 residues long: Hydroxyacylglutathione hydrolase (260 aa).

The Zn(2+) site is built by His61, His63, Asp65, His66, His119, Asp138, and His176.

The protein belongs to the metallo-beta-lactamase superfamily. Glyoxalase II family. As to quaternary structure, monomer. The cofactor is Zn(2+).

It carries out the reaction an S-(2-hydroxyacyl)glutathione + H2O = a 2-hydroxy carboxylate + glutathione + H(+). Its pathway is secondary metabolite metabolism; methylglyoxal degradation; (R)-lactate from methylglyoxal: step 2/2. Thiolesterase that catalyzes the hydrolysis of S-D-lactoyl-glutathione to form glutathione and D-lactic acid. The protein is Hydroxyacylglutathione hydrolase of Brucella suis (strain ATCC 23445 / NCTC 10510).